The primary structure comprises 250 residues: Probable transcriptional regulatory protein MAP_1030 (250 aa).

The protein belongs to the TACO1 family.

The protein resides in the cytoplasm. This Mycolicibacterium paratuberculosis (strain ATCC BAA-968 / K-10) (Mycobacterium paratuberculosis) protein is Probable transcriptional regulatory protein MAP_1030.